The chain runs to 291 residues: 4-hydroxy-tetrahydrodipicolinate synthase (291 aa).

T44 contributes to the pyruvate binding site. Y132 (proton donor/acceptor) is an active-site residue. K160 functions as the Schiff-base intermediate with substrate in the catalytic mechanism. I202 is a pyruvate binding site.

Belongs to the DapA family. In terms of assembly, homotetramer; dimer of dimers.

The protein localises to the cytoplasm. The enzyme catalyses L-aspartate 4-semialdehyde + pyruvate = (2S,4S)-4-hydroxy-2,3,4,5-tetrahydrodipicolinate + H2O + H(+). Its pathway is amino-acid biosynthesis; L-lysine biosynthesis via DAP pathway; (S)-tetrahydrodipicolinate from L-aspartate: step 3/4. Catalyzes the condensation of (S)-aspartate-beta-semialdehyde [(S)-ASA] and pyruvate to 4-hydroxy-tetrahydrodipicolinate (HTPA). The sequence is that of 4-hydroxy-tetrahydrodipicolinate synthase from Thermodesulfovibrio yellowstonii (strain ATCC 51303 / DSM 11347 / YP87).